The chain runs to 616 residues: Chaperone protein HscA (616 aa).

Belongs to the heat shock protein 70 family.

Its function is as follows. Chaperone involved in the maturation of iron-sulfur cluster-containing proteins. Has a low intrinsic ATPase activity which is markedly stimulated by HscB. Involved in the maturation of IscU. This chain is Chaperone protein HscA, found in Salmonella agona (strain SL483).